The chain runs to 453 residues: Ribosomal protein uS12 methylthiotransferase RimO (453 aa).

The region spanning 3–118 (KKVGIISLGC…IAKVIEEFYS (116 aa)) is the MTTase N-terminal domain. 6 residues coordinate [4Fe-4S] cluster: Cys-12, Cys-48, Cys-81, Cys-162, Cys-166, and Cys-169. The region spanning 148 to 378 (STNSGYAYLK…MQLQKEIVQR (231 aa)) is the Radical SAM core domain. One can recognise a TRAM domain in the interval 381 to 449 (ESRLEKVYKT…DYDLIGEVIN (69 aa)).

The protein belongs to the methylthiotransferase family. RimO subfamily. The cofactor is [4Fe-4S] cluster.

It is found in the cytoplasm. The catalysed reaction is L-aspartate(89)-[ribosomal protein uS12]-hydrogen + (sulfur carrier)-SH + AH2 + 2 S-adenosyl-L-methionine = 3-methylsulfanyl-L-aspartate(89)-[ribosomal protein uS12]-hydrogen + (sulfur carrier)-H + 5'-deoxyadenosine + L-methionine + A + S-adenosyl-L-homocysteine + 2 H(+). Functionally, catalyzes the methylthiolation of an aspartic acid residue of ribosomal protein uS12. This chain is Ribosomal protein uS12 methylthiotransferase RimO, found in Acetivibrio thermocellus (strain ATCC 27405 / DSM 1237 / JCM 9322 / NBRC 103400 / NCIMB 10682 / NRRL B-4536 / VPI 7372) (Clostridium thermocellum).